A 206-amino-acid chain; its full sequence is Recombination protein RecR (206 aa).

The C4-type zinc finger occupies 58–73 (CENCHNISDVAVCEIC). The region spanning 81 to 176 (QIVCVVEDVR…ITSSIARGIS (96 aa)) is the Toprim domain.

It belongs to the RecR family.

Its function is as follows. May play a role in DNA repair. It seems to be involved in an RecBC-independent recombinational process of DNA repair. It may act with RecF and RecO. The protein is Recombination protein RecR of Flavobacterium psychrophilum (strain ATCC 49511 / DSM 21280 / CIP 103535 / JIP02/86).